A 205-amino-acid polypeptide reads, in one-letter code: GTP cyclohydrolase-2 (205 aa).

Residue 49-53 (RLHSE) participates in GTP binding. Positions 54, 65, and 67 each coordinate Zn(2+). GTP-binding positions include Gln70, 92–94 (EGR), and Thr114. Asp126 serves as the catalytic Proton acceptor. Residue Arg128 is the Nucleophile of the active site. The GTP site is built by Thr149 and Lys154.

It belongs to the GTP cyclohydrolase II family. Zn(2+) is required as a cofactor.

The catalysed reaction is GTP + 4 H2O = 2,5-diamino-6-hydroxy-4-(5-phosphoribosylamino)-pyrimidine + formate + 2 phosphate + 3 H(+). It functions in the pathway cofactor biosynthesis; riboflavin biosynthesis; 5-amino-6-(D-ribitylamino)uracil from GTP: step 1/4. Functionally, catalyzes the conversion of GTP to 2,5-diamino-6-ribosylamino-4(3H)-pyrimidinone 5'-phosphate (DARP), formate and pyrophosphate. This Pseudomonas entomophila (strain L48) protein is GTP cyclohydrolase-2.